The following is a 160-amino-acid chain: Cytochrome b6-f complex subunit 4 (160 aa).

The next 3 membrane-spanning stretches (helical) occupy residues 36–56, 95–115, and 127–147; these read LLYT…GLAL, LLGV…PFIE, and PIAT…GIGA.

The protein belongs to the cytochrome b family. PetD subfamily. In terms of assembly, the 4 large subunits of the cytochrome b6-f complex are cytochrome b6, subunit IV (17 kDa polypeptide, petD), cytochrome f and the Rieske protein, while the 4 small subunits are petG, petL, petM and petN. The complex functions as a dimer.

The protein localises to the plastid. Its subcellular location is the chloroplast thylakoid membrane. In terms of biological role, component of the cytochrome b6-f complex, which mediates electron transfer between photosystem II (PSII) and photosystem I (PSI), cyclic electron flow around PSI, and state transitions. In Cyanidioschyzon merolae (strain NIES-3377 / 10D) (Unicellular red alga), this protein is Cytochrome b6-f complex subunit 4.